The primary structure comprises 430 residues: Enolase (430 aa).

Residue Q164 coordinates (2R)-2-phosphoglycerate. The Proton donor role is filled by E208. Residues D245, E288, and D315 each coordinate Mg(2+). (2R)-2-phosphoglycerate-binding residues include K340, R369, S370, and K391. K340 acts as the Proton acceptor in catalysis.

The protein belongs to the enolase family. Mg(2+) is required as a cofactor.

The protein localises to the cytoplasm. It is found in the secreted. Its subcellular location is the cell surface. It catalyses the reaction (2R)-2-phosphoglycerate = phosphoenolpyruvate + H2O. Its pathway is carbohydrate degradation; glycolysis; pyruvate from D-glyceraldehyde 3-phosphate: step 4/5. Its function is as follows. Catalyzes the reversible conversion of 2-phosphoglycerate (2-PG) into phosphoenolpyruvate (PEP). It is essential for the degradation of carbohydrates via glycolysis. This chain is Enolase, found in Thermococcus kodakarensis (strain ATCC BAA-918 / JCM 12380 / KOD1) (Pyrococcus kodakaraensis (strain KOD1)).